A 317-amino-acid chain; its full sequence is Lipoyl synthase (317 aa).

The [4Fe-4S] cluster site is built by C55, C60, C66, C81, C85, C88, and S292. A Radical SAM core domain is found at 67 to 281 (WEDREATFLI…ERYATEIGFA (215 aa)).

This sequence belongs to the radical SAM superfamily. Lipoyl synthase family. [4Fe-4S] cluster is required as a cofactor.

It localises to the cytoplasm. It carries out the reaction [[Fe-S] cluster scaffold protein carrying a second [4Fe-4S](2+) cluster] + N(6)-octanoyl-L-lysyl-[protein] + 2 oxidized [2Fe-2S]-[ferredoxin] + 2 S-adenosyl-L-methionine + 4 H(+) = [[Fe-S] cluster scaffold protein] + N(6)-[(R)-dihydrolipoyl]-L-lysyl-[protein] + 4 Fe(3+) + 2 hydrogen sulfide + 2 5'-deoxyadenosine + 2 L-methionine + 2 reduced [2Fe-2S]-[ferredoxin]. It functions in the pathway protein modification; protein lipoylation via endogenous pathway; protein N(6)-(lipoyl)lysine from octanoyl-[acyl-carrier-protein]: step 2/2. Functionally, catalyzes the radical-mediated insertion of two sulfur atoms into the C-6 and C-8 positions of the octanoyl moiety bound to the lipoyl domains of lipoate-dependent enzymes, thereby converting the octanoylated domains into lipoylated derivatives. The protein is Lipoyl synthase of Mycolicibacterium gilvum (strain PYR-GCK) (Mycobacterium gilvum (strain PYR-GCK)).